Here is a 625-residue protein sequence, read N- to C-terminus: Chaperone protein DnaK (625 aa).

T197 carries the post-translational modification Phosphothreonine; by autocatalysis. Residues A598–E625 are disordered.

Belongs to the heat shock protein 70 family.

In terms of biological role, acts as a chaperone. The sequence is that of Chaperone protein DnaK from Helicobacter hepaticus (strain ATCC 51449 / 3B1).